The sequence spans 374 residues: Proton-coupled zinc antiporter SLC30A8 (374 aa).

The Cytoplasmic segment spans residues 1–67; sequence MKGSEEAYLV…QREQTFAKKK (67 aa). Residues 18 to 48 form a disordered region; the sequence is YSLTKDSEKNHPSKPPLQDEENPQSKYHCHN. Residues His45, Cys46, and His47 each coordinate Zn(2+). Residues 45 to 47 carry the HCH Motif; seals regulatory zinc-binding pocket motif; the sequence is HCH. A helical membrane pass occupies residues 68–88; it reads LCIASLICFVFISAEIVGGYI. The Lumenal, vesicle segment spans residues 89–91; sequence AGS. The helical transmembrane segment at 92 to 112 threads the bilayer; it reads LAVVTDAAHLLVDLSSFFISL. Positions 100, 104, and 131 each coordinate Zn(2+). Residues 113-134 are Cytoplasmic-facing; sequence CSLWLSSKSSTTRLTFGWHRAE. A helical membrane pass occupies residues 135–155; the sequence is ILGALMSVITIWLVTGVLVYL. Residues 156 to 169 are Lumenal, vesicle-facing; that stretch reads ACERLIRPDYTIDG. A helical transmembrane segment spans residues 170 to 190; sequence TVMLITSACALGANLVLALIL. Residues 191–222 lie on the Cytoplasmic side of the membrane; the sequence is HQSGHGHSHAGGKHEHMASEYKPQTNASIRAA. The chain crosses the membrane as a helical span at residues 223-243; it reads FIHVIGDLFQSISVLISALII. 2 residues coordinate Zn(2+): His225 and Asp229. Topologically, residues 244–251 are lumenal, vesicle; the sequence is YFKPEYKM. The helical transmembrane segment at 252–272 threads the bilayer; sequence ADPICTFIFSIFVLITTVTVL. Over 273–374 the chain is Cytoplasmic; that stretch reads RDLLTVLMEG…ECMFCYEPTQ (102 aa). His306, His323, His350, Glu357, Cys366, and Cys369 together coordinate Zn(2+).

It belongs to the cation diffusion facilitator (CDF) transporter (TC 2.A.4) family. SLC30A subfamily. Homodimer.

Its subcellular location is the cytoplasmic vesicle. The protein resides in the secretory vesicle membrane. It localises to the cell membrane. The catalysed reaction is Zn(2+)(in) + 2 H(+)(out) = Zn(2+)(out) + 2 H(+)(in). Its function is as follows. Proton-coupled zinc ion antiporter mediating the entry of zinc into the lumen of pancreatic beta cell secretory granules, thereby regulating insulin secretion. This Xenopus tropicalis (Western clawed frog) protein is Proton-coupled zinc antiporter SLC30A8 (slc30a8).